The sequence spans 111 residues: MKTLLLALVVLAFVCLGSADQVGLGKEQIDRGRRQAIGPPFTRCSQCNRNRSPQCFIEDRCTPGDFTCYTVYKPNGNGGEDWVVKGCAKTCPTAGPGERVKCCYSPRCNKN.

The signal sequence occupies residues 1–19 (MKTLLLALVVLAFVCLGSA). The propeptide occupies 20–34 (DQVGLGKEQIDRGRR). Pyrrolidone carboxylic acid is present on Gln35. Cystine bridges form between Cys44–Cys68, Cys47–Cys55, Cys61–Cys87, Cys91–Cys102, and Cys103–Cys108.

This sequence belongs to the three-finger toxin family. Ancestral subfamily. Boigatoxin sub-subfamily. As to expression, expressed by the venom gland.

Its subcellular location is the secreted. Potent postsynaptic neurotoxin. Displays readily reversible competitive antagonism at the nicotinic acetylcholine receptor (nAChR). The chain is Toxin 3FTx-Tri2 from Trimorphodon biscutatus (Western lyre snake).